Here is a 193-residue protein sequence, read N- to C-terminus: Holliday junction branch migration complex subunit RuvA (193 aa).

The segment at 1 to 63 (MIGKLTGTVT…ENINKLYGFE (63 aa)) is domain I. The tract at residues 64–148 (CRKSQEVARM…GIASSTNVHI (85 aa)) is domain II. The flexible linker stretch occupies residues 149–150 (AS). The segment at 150–193 (SEAVSALVKLGFQHKPSHKVVMEIMTKRPAIEIAELITLALKML) is domain III.

Belongs to the RuvA family. As to quaternary structure, homotetramer. Forms an RuvA(8)-RuvB(12)-Holliday junction (HJ) complex. HJ DNA is sandwiched between 2 RuvA tetramers; dsDNA enters through RuvA and exits via RuvB. An RuvB hexamer assembles on each DNA strand where it exits the tetramer. Each RuvB hexamer is contacted by two RuvA subunits (via domain III) on 2 adjacent RuvB subunits; this complex drives branch migration. In the full resolvosome a probable DNA-RuvA(4)-RuvB(12)-RuvC(2) complex forms which resolves the HJ.

It localises to the cytoplasm. In terms of biological role, the RuvA-RuvB-RuvC complex processes Holliday junction (HJ) DNA during genetic recombination and DNA repair, while the RuvA-RuvB complex plays an important role in the rescue of blocked DNA replication forks via replication fork reversal (RFR). RuvA specifically binds to HJ cruciform DNA, conferring on it an open structure. The RuvB hexamer acts as an ATP-dependent pump, pulling dsDNA into and through the RuvAB complex. HJ branch migration allows RuvC to scan DNA until it finds its consensus sequence, where it cleaves and resolves the cruciform DNA. The protein is Holliday junction branch migration complex subunit RuvA of Neorickettsia sennetsu (strain ATCC VR-367 / Miyayama) (Ehrlichia sennetsu).